The primary structure comprises 372 residues: F-box/kelch-repeat protein At2g44630 (372 aa).

Residues 1–13 (MSNADEPPQKTNQ) show a composition bias toward polar residues. The disordered stretch occupies residues 1-21 (MSNADEPPQKTNQPPSSSLTP). One can recognise an F-box domain in the interval 21–67 (PPSLFSLPVDIVLNILALVPKRYYPILCCVSKSLRSLIRSPEIHKTR). 2 Kelch repeats span residues 136–181 (EIYC…LVGG) and 183–228 (IYVI…SVSL).

The protein is F-box/kelch-repeat protein At2g44630 of Arabidopsis thaliana (Mouse-ear cress).